Consider the following 78-residue polypeptide: Large ribosomal subunit protein bL28 (78 aa).

A disordered region spans residues 1 to 26 (MSAYCQVTGRKPSFGKSVSHSHRRTN).

The protein belongs to the bacterial ribosomal protein bL28 family.

This Corynebacterium jeikeium (strain K411) protein is Large ribosomal subunit protein bL28.